Here is an 89-residue protein sequence, read N- to C-terminus: Small ribosomal subunit protein bS20 (89 aa).

A compositionally biased stretch (basic residues) spans 1–12; it reads MANIKSAKKRAK. Residues 1 to 24 are disordered; it reads MANIKSAKKRAKQTVVRNERNTGQ.

The protein belongs to the bacterial ribosomal protein bS20 family.

In terms of biological role, binds directly to 16S ribosomal RNA. This is Small ribosomal subunit protein bS20 from Xanthomonas campestris pv. campestris (strain 8004).